The chain runs to 136 residues: Large ribosomal subunit protein uL16 (136 aa).

This sequence belongs to the universal ribosomal protein uL16 family. In terms of assembly, part of the 50S ribosomal subunit.

Binds 23S rRNA and is also seen to make contacts with the A and possibly P site tRNAs. The chain is Large ribosomal subunit protein uL16 from Pelagibacter ubique (strain HTCC1062).